The primary structure comprises 262 residues: 2-oxo-tetronate isomerase (262 aa).

Glu-143 acts as the Proton donor/acceptor in catalysis. Residues Glu-143, Asp-178, Gln-204, and Glu-240 each contribute to the Mg(2+) site. Catalysis depends on Glu-240, which acts as the Proton donor/acceptor.

The protein belongs to the hyi family. OtnI subfamily.

The catalysed reaction is 2-dehydro-L-erythronate = 3-dehydro-L-erythronate. It catalyses the reaction 2-dehydro-D-erythronate = 3-dehydro-D-erythronate. Catalyzes the isomerization of 2-oxo-tetronate to 3-oxo-tetronate. The sequence is that of 2-oxo-tetronate isomerase from Pectobacterium atrosepticum (strain SCRI 1043 / ATCC BAA-672) (Erwinia carotovora subsp. atroseptica).